We begin with the raw amino-acid sequence, 391 residues long: MNFNKKTIEDIEVSGKKVLVRCDFNVPLKDGVITDENRLVGALPTIKYLVEKGAKVILCSHLGKDASKSLAPVATRLSEMLGKEVVFARDEEVVGENAKKAVSEMKDGDIVLLENTRCRKEETKNIPEFSKELASLADVFVNDAFGTAHRAHCSTVGVTDYLDTAVCGYLIQKELKFLGNAVESPVRPFVAILGGAKVSDKIAVINNLLDKVNTIIIGGGMAYTFLKAQGYEIGTSLVEEDRLEYAKEMVAKAAEKGVKFLLPVDHRVAAEFKDVEATITEDQNIPVGNMGLDIGPKTETLYADAIKDAKTVIWNGPMGVFEFENYNKGTIAVAKAMADADATTIIGGGDSAAAVNILGFGDKMTHISTGGGASLEFLEGKVLPGIAALND.

Residues 23-25 (DFN), Arg-38, 61-64 (HLGK), Arg-117, and Arg-150 each bind substrate. Residues Lys-201, Gly-291, Glu-322, and 348 to 351 (GGDS) each bind ATP.

This sequence belongs to the phosphoglycerate kinase family. Monomer.

It localises to the cytoplasm. It catalyses the reaction (2R)-3-phosphoglycerate + ATP = (2R)-3-phospho-glyceroyl phosphate + ADP. Its pathway is carbohydrate degradation; glycolysis; pyruvate from D-glyceraldehyde 3-phosphate: step 2/5. The sequence is that of Phosphoglycerate kinase from Clostridium beijerinckii (strain ATCC 51743 / NCIMB 8052) (Clostridium acetobutylicum).